Reading from the N-terminus, the 423-residue chain is uncharacterized protein (423 aa).

This is an uncharacterized protein from Pasteurella multocida (strain Pm70).